Reading from the N-terminus, the 158-residue chain is C-type lectin mannose-binding isoform (158 aa).

Residues 1–23 (MGRFLLVTLSLLVGAFSLNEANS) form the signal peptide. Disulfide bonds link Cys26/Cys37, Cys54/Cys154, Cys61/Cys156, and Cys129/Cys146. In terms of domain architecture, C-type lectin spans 33 to 155 (KNGFCYKVFN…CKALYSFICQ (123 aa)). The Mannose-binding motif lies at 119–121 (EPN). A glycan (N-linked (GlcNAc...) asparagine) is linked at Asn121. Glu127, Asn142, and Asp143 together coordinate Ca(2+).

This sequence belongs to the true venom lectin family. Dimer. Probably disulfide-linked homodimer. As to expression, expressed by the venom gland.

The protein localises to the secreted. Its function is as follows. Mannose-binding lectin that binds to and agglutinates rabbit (but not human) erythrocytes in a calcium-dependent manner. In Oxyuranus scutellatus (Coastal taipan), this protein is C-type lectin mannose-binding isoform.